The sequence spans 209 residues: MAIHVITHPLVQHKLGLMRSHGISTKSFRELCSEVGTLLTYEATQNLPLEDNEITSWDGTKLNVQHIKGKKITVVPILRAGLGMMDGVMQLLPAAKVSVVGLERNEETLEPIPYFEKLVSNINERLSLVIDPMLATGGTMIATIDMLKKAGCKEIKVIVLVAAPEGVEKTLAAHPDVEIYTASVDSHLNDKGYIVPGLGDAGDKIFGTV.

Residues arginine 79, arginine 104, and 131-139 (DPMLATGGT) contribute to the 5-phospho-alpha-D-ribose 1-diphosphate site. Uracil-binding positions include isoleucine 194 and 199 to 201 (GDA). Aspartate 200 contacts 5-phospho-alpha-D-ribose 1-diphosphate.

The protein belongs to the UPRTase family. It depends on Mg(2+) as a cofactor.

It catalyses the reaction UMP + diphosphate = 5-phospho-alpha-D-ribose 1-diphosphate + uracil. It participates in pyrimidine metabolism; UMP biosynthesis via salvage pathway; UMP from uracil: step 1/1. Its activity is regulated as follows. Allosterically activated by GTP. Functionally, catalyzes the conversion of uracil and 5-phospho-alpha-D-ribose 1-diphosphate (PRPP) to UMP and diphosphate. The protein is Uracil phosphoribosyltransferase of Pseudoalteromonas translucida (strain TAC 125).